Here is a 79-residue protein sequence, read N- to C-terminus: Acyl carrier protein (79 aa).

A Carrier domain is found at 2–77 (SDIAERVKKI…DAVKFLEKNS (76 aa)). Ser-37 carries the post-translational modification O-(pantetheine 4'-phosphoryl)serine.

This sequence belongs to the acyl carrier protein (ACP) family. 4'-phosphopantetheine is transferred from CoA to a specific serine of apo-ACP by AcpS. This modification is essential for activity because fatty acids are bound in thioester linkage to the sulfhydryl of the prosthetic group.

The protein resides in the cytoplasm. It functions in the pathway lipid metabolism; fatty acid biosynthesis. Functionally, carrier of the growing fatty acid chain in fatty acid biosynthesis. In Methylobacterium radiotolerans (strain ATCC 27329 / DSM 1819 / JCM 2831 / NBRC 15690 / NCIMB 10815 / 0-1), this protein is Acyl carrier protein.